The following is a 706-amino-acid chain: Polyribonucleotide nucleotidyltransferase (706 aa).

Mg(2+) is bound by residues Asp-486 and Asp-492. Residues 553 to 612 (PRIHTIKISTDKIKDVIGKGGSVIRALTEETGTTIEIEDDGTVRIASTDGEKAKHAIRRI) enclose the KH domain. In terms of domain architecture, S1 motif spans 622–690 (GRVYQGKVTR…RQGRVRLSIK (69 aa)).

Belongs to the polyribonucleotide nucleotidyltransferase family. As to quaternary structure, component of the RNA degradosome, which is a multiprotein complex involved in RNA processing and mRNA degradation. Requires Mg(2+) as cofactor.

Its subcellular location is the cytoplasm. It carries out the reaction RNA(n+1) + phosphate = RNA(n) + a ribonucleoside 5'-diphosphate. Functionally, involved in mRNA degradation. Catalyzes the phosphorolysis of single-stranded polyribonucleotides processively in the 3'- to 5'-direction. The sequence is that of Polyribonucleotide nucleotidyltransferase from Pectobacterium atrosepticum (strain SCRI 1043 / ATCC BAA-672) (Erwinia carotovora subsp. atroseptica).